The sequence spans 258 residues: Axonemal dynein light intermediate polypeptide 1 (258 aa).

2 disordered regions span residues 1–60 (MIPP…CVPD) and 207–231 (VNEQ…EEKK). A compositionally biased stretch (low complexity) spans 34 to 44 (SPQQPGPSGSA). Positions 176-255 (MRKALQAEQG…LKAQLEGIIA (80 aa)) form a coiled coil.

The protein belongs to the inner dynein arm light chain family. Interacts with CFAP45. Interacts with DYNC1H1. As to expression, expressed in many tissues. A smaller 0.9 kb and a larger 2.5 kb transcripts were detected at the highest level in the testis, at medium levels in the prostate, heart, liver, lung and pancreas, at low levels in the ovary, skeletal muscle and small intestine. Not detected in spleen, colon epithelium, thymus or peripheral blood leukocytes. The 0.9 kb transcript is expressed at a 20-fold higher level than the 2.5 kb transcript in the testis. Expressed in spermatozoa and airway epithelial cells (at protein level).

The protein localises to the cell projection. Its subcellular location is the cilium. The protein resides in the flagellum. It localises to the dynein axonemal particle. It is found in the cytoplasm. Functionally, involved in sperm flagellum assembly. This Homo sapiens (Human) protein is Axonemal dynein light intermediate polypeptide 1.